A 637-amino-acid chain; its full sequence is Chaperone protein DnaK (637 aa).

T203 carries the post-translational modification Phosphothreonine; by autocatalysis. The interval 600–637 (SAVYGQQQEQGAPAQEEPSAEGKKNDDEGTVEGEFREV) is disordered. The segment covering 604 to 616 (GQQQEQGAPAQEE) has biased composition (low complexity). Residues 619–637 (AEGKKNDDEGTVEGEFREV) show a composition bias toward basic and acidic residues.

It belongs to the heat shock protein 70 family.

Acts as a chaperone. This chain is Chaperone protein DnaK, found in Dehalococcoides mccartyi (strain ATCC BAA-2266 / KCTC 15142 / 195) (Dehalococcoides ethenogenes (strain 195)).